The sequence spans 896 residues: Microsomal triglyceride transfer protein large subunit (896 aa).

The N-terminal stretch at 1–21 (MILLAVLFLCFFSSYSASVKG) is a signal peptide. A Vitellogenin domain is found at 28 to 659 (LNNERLYKLT…IFQYIGKAEL (632 aa)). A disulfide bridge connects residues Cys174 and Cys194.

In terms of assembly, heterodimer; heterodimerizes with the protein disulfide isomerase (P4HB/PDI). Interacts with APOB. Interacts with PRAP1.

The protein resides in the endoplasmic reticulum. Its subcellular location is the golgi apparatus. It catalyses the reaction a 1,2-diacyl-sn-glycero-3-phosphocholine(in) = a 1,2-diacyl-sn-glycero-3-phosphocholine(out). The catalysed reaction is a 1,2-diacyl-sn-glycero-3-phosphoethanolamine(in) = a 1,2-diacyl-sn-glycero-3-phosphoethanolamine(out). It carries out the reaction a cholesterol ester(in) = a cholesterol ester(out). The enzyme catalyses a triacyl-sn-glycerol(in) = a triacyl-sn-glycerol(out). In terms of biological role, catalyzes the transport of triglyceride, cholesteryl ester, and phospholipid between phospholipid surfaces. Required for the assembly and secretion of plasma lipoproteins that contain apolipoprotein B. May be involved in regulating cholesteryl ester biosynthesis in cells that produce lipoproteins. This is Microsomal triglyceride transfer protein large subunit (Mttp) from Rattus norvegicus (Rat).